We begin with the raw amino-acid sequence, 248 residues long: Chitin deacetylase (248 aa).

A signal peptide spans 1–26 (MHFSTLFGAAATAALAGSTNASPLAR). 2 disulfide bridges follow: C38–C237 and C148–C152. The 191-residue stretch at 42 to 232 (GLVALTYDDG…TLKSKGYRAV (191 aa)) folds into the NodB homology domain. D49 functions as the Proton acceptor in the catalytic mechanism. Residue D49 participates in acetate binding. Residues D50, H104, and H108 each coordinate Co(2+). Position 145 (Y145) interacts with acetate. H206 functions as the Proton donor in the catalytic mechanism.

The protein belongs to the polysaccharide deacetylase family. As to quaternary structure, monomer. Co(2+) serves as cofactor. Post-translationally, N-glycosylated.

It is found in the secreted. The catalysed reaction is [(1-&gt;4)-N-acetyl-beta-D-glucosaminyl](n) + n H2O = chitosan + n acetate. Hydrolyzes the N-acetamido groups of N-acetyl-D-glucosamine polymers in chitin to form chitosan and acetate. May play a role in evasion of the host immune response; plant chitinases liberate chitin molecules from the fungal cell wall which act as elicitors of the plant immune response, deacetylation of the liberated chitin neutralizes elicitor activity. In Colletotrichum lindemuthianum (Bean anthracnose fungus), this protein is Chitin deacetylase.